The sequence spans 216 residues: Probable GTP-binding protein EngB (216 aa).

Positions 27-201 (GGVEIAFAGR…AQTLTGWYLA (175 aa)) constitute an EngB-type G domain. Residues 35–42 (GRSNAGKS), 62–66 (GRTQL), 80–83 (DLPG), 147–150 (TKAD), and 180–182 (FSS) each bind GTP. Residues Ser-42 and Thr-64 each contribute to the Mg(2+) site.

Belongs to the TRAFAC class TrmE-Era-EngA-EngB-Septin-like GTPase superfamily. EngB GTPase family. It depends on Mg(2+) as a cofactor.

Functionally, necessary for normal cell division and for the maintenance of normal septation. This Aeromonas hydrophila subsp. hydrophila (strain ATCC 7966 / DSM 30187 / BCRC 13018 / CCUG 14551 / JCM 1027 / KCTC 2358 / NCIMB 9240 / NCTC 8049) protein is Probable GTP-binding protein EngB.